Here is a 342-residue protein sequence, read N- to C-terminus: Histidinol-phosphate aminotransferase 2 (342 aa).

Position 206 is an N6-(pyridoxal phosphate)lysine (Lys-206).

The protein belongs to the class-II pyridoxal-phosphate-dependent aminotransferase family. Histidinol-phosphate aminotransferase subfamily. Pyridoxal 5'-phosphate serves as cofactor.

It catalyses the reaction L-histidinol phosphate + 2-oxoglutarate = 3-(imidazol-4-yl)-2-oxopropyl phosphate + L-glutamate. Its pathway is amino-acid biosynthesis; L-histidine biosynthesis; L-histidine from 5-phospho-alpha-D-ribose 1-diphosphate: step 7/9. In Archaeoglobus fulgidus (strain ATCC 49558 / DSM 4304 / JCM 9628 / NBRC 100126 / VC-16), this protein is Histidinol-phosphate aminotransferase 2 (hisC2).